A 262-amino-acid polypeptide reads, in one-letter code: uncharacterized protein (262 aa).

Transmembrane regions (helical) follow at residues 46-66 (GAVG…CYAA), 77-97 (CLTE…VIFI), 108-128 (IGVL…ICLC), 133-153 (LVIS…GVAL), 163-183 (QIVV…VVIL), 186-206 (GWSW…CLAV), and 226-246 (LLAA…VLRI).

This sequence belongs to the cytomegalovirus US12 family.

Its subcellular location is the membrane. This is an uncharacterized protein from Homo sapiens (Human).